Consider the following 392-residue polypeptide: Selenide, water dikinase 1 (392 aa).

C31 is an active-site residue. ATP contacts are provided by residues K32, 67-69 (GMD), D87, D110, and 161-164 (GGQT). Position 69 (D69) interacts with Mg(2+). D110 contacts Mg(2+). D265 provides a ligand contact to Mg(2+).

The protein belongs to the selenophosphate synthase 1 family. Class II subfamily. Homodimer. Requires Mg(2+) as cofactor.

The protein localises to the cell membrane. It is found in the nucleus membrane. It carries out the reaction hydrogenselenide + ATP + H2O = selenophosphate + AMP + phosphate + 2 H(+). Its function is as follows. Synthesizes selenophosphate from selenide and ATP. The protein is Selenide, water dikinase 1 (sephs1) of Xenopus laevis (African clawed frog).